The primary structure comprises 449 residues: SWI/SNF chromatin-remodeling accessory subunit 2 (449 aa).

The segment covering 1-11 has biased composition (polar residues); it reads MHSQQRPNPQM. Positions 1–56 are disordered; that stretch reads MHSQQRPNPQMNRHPYGTPGSAPQMRRPGGFAGQPPQMHGPRMVAPPAAPLPKKKK. The SWIB/MDM2 domain maps to 223–300; the sequence is NHPAKFKLHP…PNKLHQLLQQ (78 aa).

Belongs to the SMARCD family. As to quaternary structure, component of the multiprotein chromatin-remodeling complexes SWI/SNF: SWI/SNF-A (BAF), SWI/SNF-B (PBAF) and related complexes. The canonical complex contains a catalytic subunit swsn-4, core subunits swsn-1 and swsn-5, and accessory subunits swsn-3, swsn-6, phf-10, dpff-1, swsn-9 and either ham-3/swsn-2.1 or swsn-2.2.

The protein resides in the nucleus. It is found in the nucleoplasm. It localises to the chromosome. The protein localises to the nucleus envelope. Its function is as follows. Involved in transcriptional activation and repression of select genes by chromatin remodeling (alteration of DNA-nucleosome topology). Component of SWI/SNF chromatin remodeling complexes that carry out key enzymatic activities, changing chromatin structure by altering DNA-histone contacts within a nucleosome in an ATP-dependent manner. Probably regulates vulva development through the let-60/Ras pathway. Involved in nuclear reassembly after mitosis and recruitment of nuclear envelope protein, mel-28, to the nuclear periphery in the early embryo and in the adult germline. Involved in gonadogenesis. In Caenorhabditis elegans, this protein is SWI/SNF chromatin-remodeling accessory subunit 2.